Here is a 238-residue protein sequence, read N- to C-terminus: Ribonuclease PH (238 aa).

Residues arginine 86 and 124-126 (GTR) each bind phosphate.

Belongs to the RNase PH family. As to quaternary structure, homohexameric ring arranged as a trimer of dimers.

The catalysed reaction is tRNA(n+1) + phosphate = tRNA(n) + a ribonucleoside 5'-diphosphate. In terms of biological role, phosphorolytic 3'-5' exoribonuclease that plays an important role in tRNA 3'-end maturation. Removes nucleotide residues following the 3'-CCA terminus of tRNAs; can also add nucleotides to the ends of RNA molecules by using nucleoside diphosphates as substrates, but this may not be physiologically important. Probably plays a role in initiation of 16S rRNA degradation (leading to ribosome degradation) during starvation. This is Ribonuclease PH from Yersinia pseudotuberculosis serotype O:1b (strain IP 31758).